The sequence spans 240 residues: Lipoprotein-releasing system ATP-binding protein LolD (240 aa).

Residues 15–240 (IRAERLGKTY…GLRELTSAEV (226 aa)) enclose the ABC transporter domain. 51–58 (GASGAGKS) provides a ligand contact to ATP.

Belongs to the ABC transporter superfamily. Lipoprotein translocase (TC 3.A.1.125) family. In terms of assembly, the complex is composed of two ATP-binding proteins (LolD) and two transmembrane proteins (LolC and LolE).

It is found in the cell inner membrane. Part of the ABC transporter complex LolCDE involved in the translocation of mature outer membrane-directed lipoproteins, from the inner membrane to the periplasmic chaperone, LolA. Responsible for the formation of the LolA-lipoprotein complex in an ATP-dependent manner. In Xylella fastidiosa (strain 9a5c), this protein is Lipoprotein-releasing system ATP-binding protein LolD.